We begin with the raw amino-acid sequence, 322 residues long: Gas vesicle protein L (322 aa).

Residues 1-85 (MTEQSSGSAT…SEQATVDWST (85 aa)) form a disordered region. A compositionally biased stretch (basic and acidic residues) spans 17 to 36 (ETAKQETGRKNEQPEERTVT). Over residues 45–57 (INTTTAESETGSE) the composition is skewed to polar residues. Over residues 58–72 (QESKAGSEQESKAGS) the composition is skewed to basic and acidic residues. The span at 73 to 85 (EQESEQATVDWST) shows a compositional bias: polar residues.

It belongs to the gas vesicle GvpF/GvpL family. As to quaternary structure, gvpF to GvpM interact with each other in vitro, and may form multi-subunit complex(es). Interacts with GvpC, GvpN and GvpO.

It localises to the gas vesicle. Proteins GvpF to GvpM might be involved in nucleating gas vesicle formation. A minor component of the gas vesicle. Gas vesicles are small, hollow, gas filled protein structures that are found in several microbial planktonic microorganisms. They allow positioning of halobacteria at the optimal depth for growth in the poorly aerated, shallow brine pools of their habitat. Its function is as follows. Expression of a 9.5 kb mc-vac DNA fragment containing 2 divergently transcribed regions (gvpD-gvpE-gvpF-gvpG-gvpH-gvpI-gvpJ-gvpK-gvpL-gvpM and gvpA-gvpC-gvpN-gvpO) allows H.volcanii to produce gas vesicles. The protein is Gas vesicle protein L of Haloferax mediterranei (strain ATCC 33500 / DSM 1411 / JCM 8866 / NBRC 14739 / NCIMB 2177 / R-4) (Halobacterium mediterranei).